The sequence spans 24 residues: AEEQSFSSTKFSTDQPNLILQGDA.

Polar residues predominate over residues 1-18; sequence AEEQSFSSTKFSTDQPNL. The segment at 1-24 is disordered; the sequence is AEEQSFSSTKFSTDQPNLILQGDA.

Belongs to the leguminous lectin family. As to quaternary structure, homotetramer.

This Crotalaria juncea (Sunn hemp) protein is Lectin.